Here is a 618-residue protein sequence, read N- to C-terminus: Serine/threonine-protein kinase TNNI3K (618 aa).

Glycine 2 carries N-myristoyl glycine lipidation. Positions 21–51 (SESYVITIERLEDDLKIKEKELTELRNIFGS) form a coiled coil. ANK repeat units follow at residues 66 to 96 (NGLS…RPSR), 100 to 129 (NGFT…DIQQ), 133 to 162 (GGLT…NVNI), 166 to 195 (VFFT…DVNV), 199 to 228 (VGDR…KADV), 234 to 263 (EDHV…EVQP), 269 to 298 (YGDT…TESL), 304 to 335 (FSET…NINH), 339 to 368 (DGHT…DMNL), and 381 to 410 (DEQT…PQDE). The Protein kinase domain occupies 463–618 (IEFHEIIGSG…TAHTIYLLAP (156 aa)). ATP contacts are provided by residues 469–477 (IGSGSFGKV) and lysine 490. Aspartate 588 serves as the catalytic Proton acceptor.

This sequence belongs to the protein kinase superfamily. TKL Ser/Thr protein kinase family. MAP kinase kinase kinase subfamily. In terms of assembly, interacts with TNNI3, ACTC, ACTA1, MYBPC3, AIP, FABP3 and HADHB. Mg(2+) serves as cofactor. Post-translationally, autophosphorylated.

It localises to the nucleus. The protein resides in the cytoplasm. The enzyme catalyses L-seryl-[protein] + ATP = O-phospho-L-seryl-[protein] + ADP + H(+). The catalysed reaction is L-threonyl-[protein] + ATP = O-phospho-L-threonyl-[protein] + ADP + H(+). In terms of biological role, may play a role in cardiac physiology. This Pongo abelii (Sumatran orangutan) protein is Serine/threonine-protein kinase TNNI3K.